The following is a 391-amino-acid chain: GTPase Obg (391 aa).

Positions 1–159 constitute an Obg domain; sequence MKFIDEALIR…RDLLLELMLL (159 aa). The 174-residue stretch at 160 to 333 folds into the OBG-type G domain; that stretch reads ADVGMLGLPN…LTRDIMDFIE (174 aa). GTP is bound by residues 166-173, 191-195, 213-216, 283-286, and 314-316; these read GLPNAGKS, FTTLV, DIPG, NKID, and SAA. Positions 173 and 193 each coordinate Mg(2+).

Belongs to the TRAFAC class OBG-HflX-like GTPase superfamily. OBG GTPase family. In terms of assembly, monomer. The cofactor is Mg(2+).

It localises to the cytoplasm. An essential GTPase which binds GTP, GDP and possibly (p)ppGpp with moderate affinity, with high nucleotide exchange rates and a fairly low GTP hydrolysis rate. Plays a role in control of the cell cycle, stress response, ribosome biogenesis and in those bacteria that undergo differentiation, in morphogenesis control. This chain is GTPase Obg, found in Actinobacillus pleuropneumoniae serotype 7 (strain AP76).